Consider the following 278-residue polypeptide: MRSNMHQGHVARKRFGQNFLVDDSIIHGIVNAINPLADDVLVEIGPGLGALTDPLLERVPQMQVVELDRDLVERLRRRYGDRLQVHAGDALAFDFGRLAVPGRPLRIVGNLPYNISSPLLFHLMDYADHVHDQHFMLQKEVVDRMVAEPGSKAFGRLSIMLQVRYHMEHVLDVPPGSFNPPPKVDSAVVRMIPWPRTESGRLRSPHADCDITVLGDLVTAAFSQRRKVLRNTLSFLRDQIDFEAIGFDLGRRAEEVPVGEYVELARRLGGDASDRSAA.

Positions 18, 20, 45, 66, 89, and 110 each coordinate S-adenosyl-L-methionine.

The protein belongs to the class I-like SAM-binding methyltransferase superfamily. rRNA adenine N(6)-methyltransferase family. RsmA subfamily.

The protein resides in the cytoplasm. It catalyses the reaction adenosine(1518)/adenosine(1519) in 16S rRNA + 4 S-adenosyl-L-methionine = N(6)-dimethyladenosine(1518)/N(6)-dimethyladenosine(1519) in 16S rRNA + 4 S-adenosyl-L-homocysteine + 4 H(+). Functionally, specifically dimethylates two adjacent adenosines (A1518 and A1519) in the loop of a conserved hairpin near the 3'-end of 16S rRNA in the 30S particle. May play a critical role in biogenesis of 30S subunits. This Cupriavidus pinatubonensis (strain JMP 134 / LMG 1197) (Cupriavidus necator (strain JMP 134)) protein is Ribosomal RNA small subunit methyltransferase A.